A 1289-amino-acid polypeptide reads, in one-letter code: Ethylene-insensitive protein 2.1 (1289 aa).

Helical transmembrane passes span 18–38, 48–68, 96–116, 128–148, and 155–175; these read LLPAVGPGLLIAIGYVDPGKW, FGFDLVLPMLLFNFVAILCQY, FLGVQAALSVIALDLTMILGI, LSTCVSLAAAEAILFPFFATL, and SFLCTCIAGFILLLYFFGVLI. N-linked (GlcNAc...) asparagine glycosylation occurs at asparagine 185. A helical membrane pass occupies residues 199–219; that stretch reads LMSLLGASIMPHNFFLHSAIV. An N-linked (GlcNAc...) asparagine glycan is attached at asparagine 227. The next 7 helical transmembrane spans lie at 235 to 255, 260 to 280, 288 to 308, 335 to 355, 356 to 376, 393 to 413, and 439 to 459; these read LNHFFAILCIFSGIYLVNFVL, ANVFHSTGLVLLTFPDAMSLM, VAPFGFSLILFFANQITAFSW, IIAVVPALYCVWTSGVEGIYQ, LLILTQVMVALLLPSSVIPLF, FLEFVALISFMGMLGIKIIFV, and YIVLLITACSSFCLMLWLAAT. An N-linked (GlcNAc...) asparagine glycan is attached at asparagine 521. The segment at 611 to 659 is disordered; the sequence is LHTEKEDDEGDNWEPEDSSKGVPGSTLSLTSDGPGSFRSLSGKSDAGGN. The span at 616–626 shows a compositional bias: acidic residues; sequence EDDEGDNWEPE. Residues 635–652 are compositionally biased toward polar residues; the sequence is STLSLTSDGPGSFRSLSG. Residues serine 646 and serine 663 each carry the phosphoserine modification. Asparagine 745 is a glycosylation site (N-linked (GlcNAc...) asparagine). Positions 792-816 are disordered; the sequence is SIADSSERRYSGVRTPPSSDGWDNQ. Residues 807-816 show a composition bias toward polar residues; it reads PPSSDGWDNQ. Threonine 819 carries the post-translational modification Phosphothreonine. Serine 923 carries the post-translational modification Phosphoserine. Asparagine 1025 carries an N-linked (GlcNAc...) asparagine glycan. Positions 1208–1227 are disordered; the sequence is HRSSPPASNGMLPPASKPGR. The Nuclear localization signal signature appears at 1274–1281; that stretch reads LKRYKRRL.

The protein belongs to the NRAMP (TC 2.A.55) family.

It is found in the endoplasmic reticulum membrane. Its subcellular location is the nucleus. The protein resides in the cytoplasm. In terms of biological role, central factor in signaling pathways regulated by ethylene (ET) and involved in various processes including development, plant defense, senescence, nucleotide sugar flux, and tropisms. Trafficking signal inducing ethylene response. The nuclear localization is both necessary and sufficient to activate EIN3-mediated transcription and ethylene responses. The protein is Ethylene-insensitive protein 2.1 of Populus trichocarpa (Western balsam poplar).